The chain runs to 63 residues: Cecropin-C (63 aa).

Residues 1–23 form the signal peptide; it reads MNFNKIFVFVALILAISLGQSEA. Residue R62 is modified to Arginine amide.

This sequence belongs to the cecropin family.

Its subcellular location is the secreted. Functionally, cecropins have lytic and antibacterial activity against several Gram-positive and Gram-negative bacteria. In Drosophila orena (Fruit fly), this protein is Cecropin-C (CecC).